The following is a 545-amino-acid chain: Glucose-6-phosphate isomerase (545 aa).

Catalysis depends on Glu345, which acts as the Proton donor. Catalysis depends on residues His376 and Lys514.

Belongs to the GPI family.

Its subcellular location is the cytoplasm. It carries out the reaction alpha-D-glucose 6-phosphate = beta-D-fructose 6-phosphate. Its pathway is carbohydrate biosynthesis; gluconeogenesis. It participates in carbohydrate degradation; glycolysis; D-glyceraldehyde 3-phosphate and glycerone phosphate from D-glucose: step 2/4. Functionally, catalyzes the reversible isomerization of glucose-6-phosphate to fructose-6-phosphate. The sequence is that of Glucose-6-phosphate isomerase from Leptothrix cholodnii (strain ATCC 51168 / LMG 8142 / SP-6) (Leptothrix discophora (strain SP-6)).